Reading from the N-terminus, the 2998-residue chain is MTNNTNLSSYKLAKPNENEDDIAIIGIGFRLPSGDLSKSNDSTKELWNNLMNGFDGVVKTTERWSDNFNELGEISNGNAGLLPLDEWKSFDPLFFGINPSEVSTIDPQQRLLLKCTWEALEDSNIDPIKIRGSKTSVFIGCTSVDYKDISKNPNSTQTNVFGSALSTIANRISHCFDFSGESITIDTACSSSLNAIRLGYQSIKSGFSNLSIVGGVNSLFETNSSKSFSYLNMLSKSQGKCMTFDESADGFVRGEGVALLVLKSLKQSVADGNNIYCVIKGASSNVDGNGLKDKQNFYSPSSISQADNVNNAFSSTNGTVKLEDIVYIEAHGTGTPTGDPVELDGMSRVFKTHSSNNSTLSQQPLLIGSIKSSIGHLEAASGSASLVKCCLMFKNKYLTPNINFKNPNPSIKFDEWNLKVVTEPIHFKDLQKTDNFSMILNNFGITGSNCCLILSEYKGNNKNNNNKNSCTHSEDLKNLQTQKQYLVPFSANSVQSLKQYESVVNDYLFKKSNDFKEFVKQQIFSKSSSLYQRCVVTASNWNEFSENIESTNKIQTSNTQSSNMSKVQNNPITVFVFAGQGSQYNTMSLELYNNEPIFKKSMDLLDDELLKYYEYSVLNKFRSIIDDGDRSIQHPTIAQPIVCMLTISLFELYKHWGIEASFIVGHSLGEIPAAYCSGMITLDTLCYLIYHRSLAQIETHCNGGRMLSIGISSEDYLSSNYSTKYPDIEIACYNSPNSIVLGGNEQQLNQISNELKDKGIFSTMLASLSSFHTSNQKITKDQILNLNINHQSPTIPIFSTVTTNLYESSTTPFNSEYVYNNIIKPVKFSQTISNLYKHIEINKLGNEIVFIELAPHPTLQFYLKQMIPVSSLSTTEETNFKVSIYSALHKKKNDIQEIQKTIAKLYCDNRYNINFKSQFKDEQIINNNNNQEIILPNYQWDDKKYWKEDLVQQKHKFQGPPIDQLGFSLIESSPNVKSYQTFIDISKKPFKYLKGHIVNGKYYFPGCGYIDNLLKLYPSQDLTIGSMEFKSPLILIDGINQCLQTNIFQTGKTEFKVQFHFKDNKSNEWVQSSNGNFQLFTSGNNVNKKYNIQELINNKCNLTKLTKNELYQNIKSKTGLSYNGEFQTVSECYLGDDCSLAVIPIKPSSSTLFTPSVLDSCLHSSVGLVDEQCQLVFEKVEGFKYYSSNIPSFLELSSDKEIKLYSYSYSFKRIGDSFSSSIIVMFEDGRILIEMNKLVCKSLTIIKDSSIIQPPLNDLYSTYNQLIDSPIPSPSKFTQQLDEPDRMNEKVKNYDISILKNFISNQLYSNIVKRCPQLNIEIIKSMDIIQLLEKYLNDDKHSKLFKSIFETLKDSVIDVNNVDDHQHYYNENNIEHYEILLKSTKIVAKLLFPLIDDDPSNDTPQSLFDNGMLDNFYSNYHILKIHNQVIANIISESILPNLNEKMVFRILEFGGGVASLSLIVLNKINELLIEFPNSEIDIEYTWSDISPSFIPDAKSKFSHINQNIHIIYKPLNLEKQLITEQMLKPSYYDFVIMSNVLHVVKQLKPPINQIYEILKPNGQLVFVEPIYKSILLDNIFGVFDQWWCFTDLTIRKDRCCMPKESWNNLLLDCSFNEVKVIMSIEIPSFYVIHTQKPSIYSNLNNIETITQINDDNNNNIIIYGDNELSLFKEVSTTTISNVQQFNELIKKSIITDKSIVYFTKAINQLTIDNFKFVTLEYIQINQILLSNNLKCKNVLITLNSDNINYLSASVIGAARYFEVFPQLNLFSLDFDQKSINNKELNNTIQLLLDSNKFIQKEFKIRDNKVYYERYKRNSNLNKTFVISESFVNDINQLYAKLSPNLEFILDSKKSLKENQLEVHVKATGINYKDYLLYCGLLPPEMVSHNNDINDPEFGLEFSGIVSAIGSNINDFKIGDQIYGIGYDTTSTHIIVDYNQIYHKPTNINHIEAASIPGVYLTSYHSIFNVGNLKIKRNESILIHSGSGGIGLSALNILKWKGHKSHIFVTVGSKEKEQYLINTYGDFITGIYSTMNKDYSEEIKLKLKQLKSDKHGVDLILNTLSSDYMDSNFKCLNIGGRIVDLSITHLNPNEYINNNNFKYNFGYHNVELLFIEKTLIQRMLKKITRAIENHELNLMPITEFSNSTIKVAIEYINKRKHIGKIVVNNDINILSDLIDVHKNQINSNFSILKTNYKINSNNQDHLGSTILVTGQSGIILEILKWIVKFSENVKNIIVLSKSSMKWGLELLIKKNKHINFHFKSVDVSNSISVDNAIDQILNGNSKTITNIDSIFHFAFEFTFCGVNEIDMKSLEISHGAKTMGAINLHNQSIKRNWKLKQFILSSSVASIIGSVDQCSYVCSNRVLDSLSRYRKSIGLPSICTNYGSVQSAGLVSRNESIAQLLDGQGLYPLPINMILGLLDSQIQNVFQSTNLIVSPFNFKTLFEHYKKHPMIHKFDFITNLIENNELTNNKKIENDTSIDSLFLNKLSELLSIEVSKINQDLRLLEYGADSLLTVQLKNWIDKEIYSSLITIQQLQSNTISSSIKLITNQLKLKIGDGQQQQHRQNKKNNNIPENKTIESEEFWKNEIKLDDDEFNLISSNSIRNQIEIKEFKENELRIFLTGSTGFLGAYLLWYLIQMECCSVVYCLLRNKSKSSNPVDEILNNLKHHQLYYKQLNEKHLSKIIPIVGDLTKKKFGLSDYNYSLISNNTNLLLNSGADINLRANYYECKQVNVNSLKEIIKLSLFGKPTQQQHHQPKPILTISTFSVFYNQEFNGSIATPKLETINNLPTGYMQSKVISEFLLTEASSRFKIPSIIFRAPSIFSNPDTGIGHYGDITQLMLQSSFKLGYFPSDKEVDINLLCSPVNWVADNIIKIMFNDNFKDSSDSSLKIYNVYGEVINSVKILQVLKNEKGGNCKEVNFKQWKRMVMDSNEKVCIKLRTFHTLDFDQKYNFEKAYGISKEQISFLQSIGSYGNGGENNLIQMIFNHILAKYSK.

Positions 19 to 456 (EDDIAIIGIG…GSNCCLILSE (438 aa)) constitute a Ketosynthase family 3 (KS3) domain. Active-site for beta-ketoacyl synthase activity residues include Cys189, His331, and His376. The tract at residues 657 to 690 (GIEASFIVGHSLGEIPAAYCSGMITLDTLCYLIY) is acyl/malonyl transferase. The For acyl/malonyl transferase activity role is filled by Ser667. Positions 962–1084 (IDQLGFSLIE…GNFQLFTSGN (123 aa)) are N-terminal hotdog fold. Residues 962–1249 (IDQLGFSLIE…CKSLTIIKDS (288 aa)) form the PKS/mFAS DH domain. His996 acts as the Proton acceptor; for dehydratase activity in catalysis. The C-terminal hotdog fold stretch occupies residues 1101–1249 (NLTKLTKNEL…CKSLTIIKDS (149 aa)). Asp1159 serves as the catalytic Proton donor; for dehydratase activity. The chain crosses the membrane as a helical span at residues 1979–1999 (SILIHSGSGGIGLSALNILKW). Residues 2476–2553 (ENDTSIDSLF…SSIKLITNQL (78 aa)) enclose the Carrier domain. Ser2513 bears the O-(pantetheine 4'-phosphoryl)serine mark. The interval 2559–2578 (DGQQQQHRQNKKNNNIPENK) is disordered. The segment covering 2561–2573 (QQQQHRQNKKNNN) has biased composition (low complexity). Residues 2621–2641 (IFLTGSTGFLGAYLLWYLIQM) form a helical membrane-spanning segment.

Pantetheine 4'-phosphate serves as cofactor.

The protein localises to the membrane. Functionally, probable polyketide synthase. The chain is Probable polyketide synthase 14 (pks14) from Dictyostelium discoideum (Social amoeba).